The primary structure comprises 847 residues: MMSGVMLLMLAIFLIIAFTLMYLAIYFEFDETTFTKRLQVMTEYVKRTNADEPTPDVIGYVSDIMQNTYIVTWFNTVDLSTYHESVHDDRIEIFDFLNQKFQPVDRIVHDRVRANDENPNEFILSGDKADVTMKCPAYFNFDYAQLKCVPVPPCDNKSAGLYPMDERLLDTLVLNQHLDKDYSTNAHLYHPTFYLRCFANGAHAVEECPDNYTFDAETGQCKVNELCENRPDGYILSYFPSNLLVNQFMQCVNGRHVVGECPANKIFDRNLMSCVEAHPCAFNGAGHTYITADIGDTQYFKCLNNNESQLITCINRIRNSDNQYECSGDSRCIDLPNGTGQHVFKHVDDDISYNSGQLVCDNFEVISDIECDQSNVFENALFMDKFRLNMQFPTEVFDGTACVPATADNVNFLRSTFAIENIPNHYGIDMQTSMLGTTEMVKQLVSKDLSLNNDAIFAQWLLYARDKDAIGLNPFTGEPIDCFGDNLYDVFDARRANICNDSGTSVLKTLNFGDGEFLNVLSSTLTGKDEDYRQFCAISYENGQKIVENEHFQRRILTNILQSDVCADLYTTLYQKYTTLNSKYTTTPLQYNHTLVKRPKNIEIYGANTRLKNATIPKNAATIPPVFNPFENQPNNRQNDSILPLFNPFQTTDAVWYSEPGGDDDHWVVAPPTAPPPPPEPEPEPEPEPEPEPELPSPLILDNKDLFYSCHYSVPFFKLTSCHAENDVIIDALNELRNNVKVDADCELAKDLSHVLNAYAYVGNGIGCRSAYDGDAIVVKKEAVPSHVYANLNTQSNDGVKYNRWLHVKNGQYMACPEELYDNNEFKCNIESDKLYYLDNLQEDSIV.

Residues 1-19 (MMSGVMLLMLAIFLIIAFT) form the signal peptide. The C2HC BV-type zinc finger occupies 148–197 (CVPVPPCDNKSAGLYPMDERLLDTLVLNQHLDKDYSTNAHLYHPTFYLRC). N-linked (GlcNAc...) asparagine; by host glycans are attached at residues Asn156 and Asn211. Intrachain disulfides connect Cys208–Cys221 and Cys261–Cys274. One can recognise a Chitin-binding type-2 domain in the interval 224-282 (NELCENRPDGYILSYFPSNLLVNQFMQCVNGRHVVGECPANKIFDRNLMSCVEAHPCAF). Asn306, Asn337, Asn500, Asn592, Asn613, and Asn639 each carry an N-linked (GlcNAc...) asparagine; by host glycan. Residues 665–698 (DHWVVAPPTAPPPPPEPEPEPEPEPEPEPELPSP) form a disordered region. A compositionally biased stretch (acidic residues) spans 681 to 693 (PEPEPEPEPEPEP).

It localises to the virion. In terms of biological role, plays an essential role in nucleocapsid assembly. Essential for the establishment of efficient per os infection. This Autographa californica nuclear polyhedrosis virus (AcMNPV) protein is Capsid-associated protein AC83 (p95).